A 337-amino-acid chain; its full sequence is MAQRPNLLSHLQDLVTKFKNMTMAQDRFKFVFTANEAALEGVTDPIRLPNLIRKAMCLARAPISKYKVGAVGRASSGRVYLGVNVDFPGLPLHHSIHAEQFLVTNLALNYEKDLCKLAVAISTDGLEFGTPCGNCLQFLMEMSNALDMKILSKPKHEAGSFSSLRLLLPNVLPKGSPFLLEKRYNCLTLSGSAGEICSLDCSHLKRRALAAANNSFSPYTESPSGVALLDNDGNWYRGWYIESVASNPSLGPVQAALVDFVARSRGKMFNKIVQAVLVEKNNASVSQERTAKIILDTIAPNCDFKVFHCSVDCAKRLKYLRETLVIDTLGDYTGLHY.

CMP/dCMP-type deaminase domains follow at residues 43–164 and 199–320; these read TDPI…FSSL and LDCS…LKYL. 84–86 lines the substrate pocket; sequence NVD. Zn(2+) is bound at residue histidine 97. Catalysis depends on glutamate 99, which acts as the Proton donor. Residues cysteine 132 and cysteine 135 each coordinate Zn(2+).

The protein belongs to the cytidine and deoxycytidylate deaminase family. As to quaternary structure, homodimer. Zn(2+) is required as a cofactor.

It carries out the reaction cytidine + H2O + H(+) = uridine + NH4(+). The catalysed reaction is 2'-deoxycytidine + H2O + H(+) = 2'-deoxyuridine + NH4(+). This enzyme scavenges exogenous and endogenous cytidine and 2'-deoxycytidine for UMP synthesis. The protein is Cytidine deaminase 2 (CDA2) of Arabidopsis thaliana (Mouse-ear cress).